Here is a 766-residue protein sequence, read N- to C-terminus: General transcription and DNA repair factor IIH helicase/translocase subunit XPB2 (766 aa).

The interval 1–56 is disordered; that stretch reads MGNDERKRPTKKMKYGGKDDQKMKNIQNVEDYYDDADEDSRDGEGEEKRRDFTDLE. A compositionally biased stretch (acidic residues) spans 31–41; the sequence is DYYDDADEDSR. A compositionally biased stretch (basic and acidic residues) spans 42-56; it reads DGEGEEKRRDFTDLE. The 163-residue stretch at 293 to 455 folds into the Helicase ATP-binding domain; the sequence is MFGNGRARSG…DLNFLIGPKL (163 aa). 306-313 is an ATP binding site; it reads LPCGAGKS. The DEVH box motif lies at 408–411; that stretch reads DEVH. One can recognise a Helicase C-terminal domain in the interval 510–676; sequence RACEFLIRFH…SLPPPDAGSS (167 aa). The span at 739 to 748 shows a compositional bias: polar residues; it reads SGRQKSGNQS. Residues 739–766 are disordered; the sequence is SGRQKSGNQSKKPKDPTKRHNIFKKRYV. The short motif at 749–765 is the Nuclear localization signal element; sequence KKPKDPTKRHNIFKKRY. The segment covering 757-766 has biased composition (basic residues); that stretch reads RHNIFKKRYV.

The protein belongs to the helicase family. RAD25/XPB subfamily. In terms of assembly, component of the 7-subunit TFIIH core complex composed of XPB, XPD, TFB1/GTF2H1, GTF2H2/P44, TFB4/GTF2H3, TFB2/GTF2H4 and TFB5/GTF2H5, which is active in NER. The core complex associates with the 3-subunit CDK-activating kinase (CAK) module composed of CYCH1/cyclin H1, CDKD and MAT1/At4g30820 to form the 10-subunit holoenzyme (holo-TFIIH) active in transcription. Expressed ubiquitously.

The protein localises to the nucleus. The enzyme catalyses Couples ATP hydrolysis with the unwinding of duplex DNA by translocating in the 3'-5' direction.. The catalysed reaction is ATP + H2O = ADP + phosphate + H(+). ATP-dependent 3'-5' DNA helicase/translocase; binds dsDNA rather than ssDNA, unzipping it in a translocase rather than classical helicase activity. Component of the general transcription and DNA repair factor IIH (TFIIH) core complex. When complexed to CDK-activating kinase (CAK), involved in RNA transcription by RNA polymerase II. The ATPase activity of XPB/ERCC3, but not its helicase activity, is required for DNA opening; it may wrap around the damaged DNA wedging it open, causing localized melting and twisting that allows XPD/ERCC2 helicase to anchor. The ATP-dependent helicase activity of XPB/ERCC3 may be required for promoter escape. Also involved in transcription-coupled nucleotide excision repair (NER) of damaged DNA. In NER, TFIIH acts by opening DNA around the lesion to allow the excision of the damaged oligonucleotide and its replacement by a new DNA fragment. The structure of the TFIIH transcription complex differs from the NER-TFIIH complex. Partially complements UV sensitivity of a yeast SSL2 mutation. The protein is General transcription and DNA repair factor IIH helicase/translocase subunit XPB2 (XPB2) of Arabidopsis thaliana (Mouse-ear cress).